The primary structure comprises 567 residues: Low-affinity glucose transporter (567 aa).

Residues 1–24 show a composition bias toward polar residues; it reads MSNQMTDSTSAGSGTEHSVDTNTA. Residues 1-36 form a disordered region; that stretch reads MSNQMTDSTSAGSGTEHSVDTNTALKAGSPNDLKVS. Residues 18-62 lie on the Cytoplasmic side of the membrane; it reads SVDTNTALKAGSPNDLKVSHEEDLNDLEKTAEETLQQKPAKEYIF. The chain crosses the membrane as a helical span at residues 63 to 83; the sequence is VSLCCVMVAFGGFVFGWDTGT. The Extracellular portion of the chain corresponds to 84-113; that stretch reads ISGFVNQTDFLRRFGQEKADGSHYLSNVRT. Asn-89 carries N-linked (GlcNAc...) asparagine glycosylation. Residues 114–134 traverse the membrane as a helical segment; the sequence is GLIVSIFNIGCAVGGIVLSNI. Topologically, residues 135 to 141 are cytoplasmic; that stretch reads GDRWGRR. The helical transmembrane segment at 142–162 threads the bilayer; it reads IGLITVIIIYVIGIIIQIASV. Topologically, residues 163-167 are extracellular; the sequence is DKWYQ. Residues 168–188 form a helical membrane-spanning segment; that stretch reads YFIGRIISGLGVGGITVLSPM. The Cytoplasmic segment spans residues 189 to 199; sequence LISETAPKHLR. A helical membrane pass occupies residues 200-220; that stretch reads GTLVSCYQLMITFGIFLGYCT. Over 221–234 the chain is Extracellular; it reads NYGTKNYSNSVQWR. A helical membrane pass occupies residues 235–255; sequence VPLGLCFAWAIFMVLGMMFVP. Residues 256–334 are Cytoplasmic-facing; the sequence is ESARFLVETD…MGIMIQSLQQ (79 aa). The chain crosses the membrane as a helical span at residues 335–354; that stretch reads LTGDNYFFYYGTTIFQSVGM. At 355–358 the chain is on the extracellular side; it reads DDSF. A helical membrane pass occupies residues 359 to 379; that stretch reads ETSIVLGIVNFASTFFALYTV. Residues 380-386 lie on the Cytoplasmic side of the membrane; that stretch reads DHFGRRN. Residues 387-407 form a helical membrane-spanning segment; it reads CLLYGCVGMVACYVVYASVGV. At 408-429 the chain is on the extracellular side; sequence TRLWPDGPDHPDISSKGAGNCM. Residues 430-450 traverse the membrane as a helical segment; sequence IVFACFYIFCFATTWAPIAYV. The Cytoplasmic segment spans residues 451-466; sequence VISESYPLRVKGKAMA. Residues 467–487 form a helical membrane-spanning segment; it reads IASASNWIWGFLIGFFTPFIT. Residues 488-493 are Extracellular-facing; that stretch reads SAIHFY. A helical membrane pass occupies residues 494-514; it reads YGYVFMGCMVFAFFYVYFFVP. The Cytoplasmic portion of the chain corresponds to 515–567; the sequence is ETKGLTLEEVNEMYSEGVLPWKSSSWVPSSRRGAEYDVDALQHDDKPWYKAML.

Belongs to the major facilitator superfamily. Sugar transporter (TC 2.A.1.1) family.

The protein localises to the membrane. Low-affinity glucose transporter. The protein is Low-affinity glucose transporter (RAG1) of Kluyveromyces lactis (strain ATCC 8585 / CBS 2359 / DSM 70799 / NBRC 1267 / NRRL Y-1140 / WM37) (Yeast).